The primary structure comprises 572 residues: Acyl-coenzyme A synthetase ACSM2, mitochondrial (572 aa).

Residues 1-46 (MHWLWKIPRLCTFWGTEMFHRTFHMNIKKLMPIQWGHQEVPAKFNF) constitute a mitochondrion transit peptide. Gln139 provides a ligand contact to CoA. Residues 221 to 229 (TSGTSGPPK), 359 to 364 (EIYGQT), Asp446, and Arg461 each bind ATP. Residue Thr364 coordinates substrate. 469–471 (SGY) is a CoA binding site. Arg472 serves as a coordination point for substrate. CoA-binding positions include Arg501, Lys532, and 540–542 (YPR). Position 557 (Lys557) interacts with ATP.

The protein belongs to the ATP-dependent AMP-binding enzyme family. Monomer. Mg(2+) serves as cofactor. Mn(2+) is required as a cofactor. Detected in kidney, in proximal tubules.

It is found in the mitochondrion. It carries out the reaction a medium-chain fatty acid + ATP + CoA = a medium-chain fatty acyl-CoA + AMP + diphosphate. The catalysed reaction is benzoate + ATP + CoA = benzoyl-CoA + AMP + diphosphate. The enzyme catalyses hexanoate + ATP + CoA = hexanoyl-CoA + AMP + diphosphate. It catalyses the reaction butanoate + ATP + CoA = butanoyl-CoA + AMP + diphosphate. It carries out the reaction octanoate + ATP + CoA = octanoyl-CoA + AMP + diphosphate. The catalysed reaction is decanoate + ATP + CoA = decanoyl-CoA + AMP + diphosphate. Its function is as follows. Catalyzes the activation of fatty acids by CoA to produce an acyl-CoA, the first step in fatty acid metabolism. Capable of activating medium-chain fatty acids (e.g. butyric (C4) to decanoic (C10) acids), and certain carboxylate-containing xenobiotics, e.g. benzoate. The protein is Acyl-coenzyme A synthetase ACSM2, mitochondrial (Acsm2) of Rattus norvegicus (Rat).